Consider the following 370-residue polypeptide: 2-Hydroxyacid oxidase 1 (370 aa).

The FMN hydroxy acid dehydrogenase domain occupies 1–365; sequence MLPRLVCISD…DKTLVRKNPL (365 aa). Y26 provides a ligand contact to glyoxylate. Residues 79 to 81, S108, and Q130 contribute to the FMN site; that span reads ATA. Position 132 (Y132) interacts with glyoxylate. T158 is a binding site for FMN. R167 provides a ligand contact to glyoxylate. Residue K184 is modified to N6-succinyllysine. S194 and S230 each carry phosphoserine. K236 and S258 together coordinate FMN. Positions 260 and 263 each coordinate glyoxylate. The active-site Proton acceptor is the H260. FMN contacts are provided by residues 291–295 and 314–315; these read DGGVR and GR. The Microbody targeting signal motif lies at 368–370; the sequence is SKI.

Belongs to the FMN-dependent alpha-hydroxy acid dehydrogenase family. As to quaternary structure, homotetramer. The cofactor is FMN. In terms of tissue distribution, liver.

The protein localises to the peroxisome matrix. The enzyme catalyses a (2S)-2-hydroxycarboxylate + O2 = a 2-oxocarboxylate + H2O2. It carries out the reaction glycolate + O2 = glyoxylate + H2O2. The catalysed reaction is glyoxylate + O2 + H2O = oxalate + H2O2 + H(+). It catalyses the reaction 2-hydroxyhexadecanoate + O2 = 2-oxohexadecanoate + H2O2. The enzyme catalyses 2-hydroxyoctanoate + O2 = 2-oxooctanoate + H2O2. The protein operates within amino-acid biosynthesis; glycine biosynthesis. Broad substrate specificity (S)-2-hydroxy-acid oxidase that preferentially oxidizes glycolate. The glyoxylate produced by the oxidation of glycolate can then be utilized by alanine-glyoxylate aminotransferase for the peroxisomal synthesis of glycine; this pathway appears to be an important step for the detoxification of glyoxylate which, if allowed to accumulate, may be metabolized to oxalate with formation of kidney stones. Can also catalyze the oxidation glyoxylate, and long chain hydroxyacids such as 2-hydroxyhexadecanoate and 2-hydroxyoctanoate. Active in vitro with the artificial electron acceptor 2,6-dichlorophenolindophenol (DCIP), but O2 is believed to be the physiological electron acceptor, leading to the production of H2O2. The protein is 2-Hydroxyacid oxidase 1 of Mus musculus (Mouse).